The following is a 528-amino-acid chain: UDP-glucuronosyltransferase 2A2 (528 aa).

Residues 1 to 21 form the signal peptide; that stretch reads MIKKVLQLLIFHLTLAEIVLS. Residues 22-494 are Extracellular-facing; sequence GNVVVWPTDG…FQYHSLDVIG (473 aa). N-linked (GlcNAc...) asparagine glycans are attached at residues Asn-48 and Asn-314. Residues 495–515 traverse the membrane as a helical segment; the sequence is FLLACVASAILLVAKCCLFIF. Topologically, residues 516 to 528 are cytoplasmic; it reads QKVGKTGKKKKRD.

It belongs to the UDP-glycosyltransferase family.

It localises to the membrane. The catalysed reaction is glucuronate acceptor + UDP-alpha-D-glucuronate = acceptor beta-D-glucuronoside + UDP + H(+). It carries out the reaction 17alpha-estradiol + UDP-alpha-D-glucuronate = 17alpha-estradiol 3-O-(beta-D-glucuronate) + UDP + H(+). It catalyses the reaction 17beta-estradiol + UDP-alpha-D-glucuronate = 17beta-estradiol 3-O-(beta-D-glucuronate) + UDP + H(+). The enzyme catalyses chenodeoxycholate + UDP-alpha-D-glucuronate = chenodeoxycholoyl-24-O-(beta-D-glucuronate) + UDP. The catalysed reaction is lithocholate + UDP-alpha-D-glucuronate = lithocholoyl-24-O-(beta-D-glucuronate) + UDP. It carries out the reaction deoxycholate + UDP-alpha-D-glucuronate = deoxycholoyl-24-O-(beta-D-glucuronate) + UDP. It catalyses the reaction hyocholate + UDP-alpha-D-glucuronate = hyocholoyl-24-O-(beta-D-glucuronate) + UDP. The enzyme catalyses hyodeoxycholate + UDP-alpha-D-glucuronate = hyodeoxycholate 6-O-(beta-D-glucuronate) + UDP + H(+). Functionally, UDP-glucuronosyltransferase (UGT) that catalyzes phase II biotransformation reactions in which lipophilic substrates are conjugated with glucuronic acid to increase the metabolite's water solubility, thereby facilitating excretion into either the urine or bile. Essential for the elimination and detoxification of drugs, xenobiotics and endogenous compounds. Catalyzes the glucuronidation of endogenous estrogen hormone estradiol. Contributes to bile acid (BA) detoxification by catalyzing the glucuronidation of BA substrates, which are natural detergents for dietary lipids absorption. Potential role in detoxification of toxic waste compounds in the amniotic fluid before birth, and air-born chemical after birth. This Mus musculus (Mouse) protein is UDP-glucuronosyltransferase 2A2.